A 212-amino-acid polypeptide reads, in one-letter code: Uridine kinase (212 aa).

13 to 20 (GASASGKS) is an ATP binding site.

Belongs to the uridine kinase family.

The protein resides in the cytoplasm. It catalyses the reaction uridine + ATP = UMP + ADP + H(+). It carries out the reaction cytidine + ATP = CMP + ADP + H(+). The protein operates within pyrimidine metabolism; CTP biosynthesis via salvage pathway; CTP from cytidine: step 1/3. It functions in the pathway pyrimidine metabolism; UMP biosynthesis via salvage pathway; UMP from uridine: step 1/1. The chain is Uridine kinase from Shewanella putrefaciens (strain CN-32 / ATCC BAA-453).